We begin with the raw amino-acid sequence, 78 residues long: Leukemia-associated protein 1 (78 aa).

May act as a tumor suppressor. This is Leukemia-associated protein 1 (DLEU1) from Homo sapiens (Human).